The following is a 318-amino-acid chain: Methionyl-tRNA formyltransferase (318 aa).

112-115 is a (6S)-5,6,7,8-tetrahydrofolate binding site; it reads SLLP.

Belongs to the Fmt family.

The catalysed reaction is L-methionyl-tRNA(fMet) + (6R)-10-formyltetrahydrofolate = N-formyl-L-methionyl-tRNA(fMet) + (6S)-5,6,7,8-tetrahydrofolate + H(+). Attaches a formyl group to the free amino group of methionyl-tRNA(fMet). The formyl group appears to play a dual role in the initiator identity of N-formylmethionyl-tRNA by promoting its recognition by IF2 and preventing the misappropriation of this tRNA by the elongation apparatus. The chain is Methionyl-tRNA formyltransferase from Citrifermentans bemidjiense (strain ATCC BAA-1014 / DSM 16622 / JCM 12645 / Bem) (Geobacter bemidjiensis).